The chain runs to 47 residues: Large ribosomal subunit protein bL27c (47 aa).

The interval 1 to 21 (STKNGRDSNAQRLGVKKYGGE) is disordered.

It belongs to the bacterial ribosomal protein bL27 family.

It is found in the plastid. Its subcellular location is the chloroplast. This is Large ribosomal subunit protein bL27c (rpl27) from Porphyridium purpureum (Red alga).